We begin with the raw amino-acid sequence, 219 residues long: Large ribosomal subunit protein uL4 (219 aa).

Positions 45–103 are disordered; it reads ARRQGTHATKTRGQVRGGGRKPYRQKGTGRARQGSIRAPQFTGGGTVHGPQPRDYDQRT. Over residues 62–73 the composition is skewed to basic residues; the sequence is GGRKPYRQKGTG.

Belongs to the universal ribosomal protein uL4 family. In terms of assembly, part of the 50S ribosomal subunit.

Functionally, one of the primary rRNA binding proteins, this protein initially binds near the 5'-end of the 23S rRNA. It is important during the early stages of 50S assembly. It makes multiple contacts with different domains of the 23S rRNA in the assembled 50S subunit and ribosome. In terms of biological role, forms part of the polypeptide exit tunnel. The sequence is that of Large ribosomal subunit protein uL4 from Corynebacterium kroppenstedtii (strain DSM 44385 / JCM 11950 / CIP 105744 / CCUG 35717).